The primary structure comprises 268 residues: Thymidylate synthase (268 aa).

DUMP-binding positions include arginine 26 and 131–132 (RR). The Nucleophile role is filled by cysteine 151. DUMP contacts are provided by residues 171–174 (RSAD), asparagine 182, and 212–214 (HIY). Aspartate 174 contributes to the (6R)-5,10-methylene-5,6,7,8-tetrahydrofolate binding site. Residue serine 267 participates in (6R)-5,10-methylene-5,6,7,8-tetrahydrofolate binding.

It belongs to the thymidylate synthase family. Bacterial-type ThyA subfamily. Homodimer.

The protein localises to the cytoplasm. The enzyme catalyses dUMP + (6R)-5,10-methylene-5,6,7,8-tetrahydrofolate = 7,8-dihydrofolate + dTMP. It functions in the pathway pyrimidine metabolism; dTTP biosynthesis. Its function is as follows. Catalyzes the reductive methylation of 2'-deoxyuridine-5'-monophosphate (dUMP) to 2'-deoxythymidine-5'-monophosphate (dTMP) while utilizing 5,10-methylenetetrahydrofolate (mTHF) as the methyl donor and reductant in the reaction, yielding dihydrofolate (DHF) as a by-product. This enzymatic reaction provides an intracellular de novo source of dTMP, an essential precursor for DNA biosynthesis. This Corynebacterium aurimucosum (strain ATCC 700975 / DSM 44827 / CIP 107346 / CN-1) (Corynebacterium nigricans) protein is Thymidylate synthase.